A 262-amino-acid chain; its full sequence is Type III pantothenate kinase (262 aa).

Residue 9-16 (DSGNTRVK) participates in ATP binding. Substrate contacts are provided by residues tyrosine 93 and 100–103 (GSDR). Aspartate 102 (proton acceptor) is an active-site residue. Aspartate 122 contributes to the K(+) binding site. Residue threonine 125 participates in ATP binding. Threonine 175 contacts substrate.

Belongs to the type III pantothenate kinase family. As to quaternary structure, homodimer. NH4(+) is required as a cofactor. It depends on K(+) as a cofactor.

The protein resides in the cytoplasm. It carries out the reaction (R)-pantothenate + ATP = (R)-4'-phosphopantothenate + ADP + H(+). The protein operates within cofactor biosynthesis; coenzyme A biosynthesis; CoA from (R)-pantothenate: step 1/5. In terms of biological role, catalyzes the phosphorylation of pantothenate (Pan), the first step in CoA biosynthesis. The chain is Type III pantothenate kinase from Nitrosospira multiformis (strain ATCC 25196 / NCIMB 11849 / C 71).